The chain runs to 470 residues: Solvent efflux pump outer membrane protein SrpC (470 aa).

The first 16 residues, 1-16 (MKFKSLPMFALLMLGG), serve as a signal peptide directing secretion. Residue Cys-17 is the site of N-palmitoyl cysteine attachment. Cys-17 carries the S-diacylglycerol cysteine lipid modification. The disordered stretch occupies residues 104–123 (LDGQASGNRTRLPDDLSPTG).

This sequence belongs to the outer membrane factor (OMF) (TC 1.B.17) family.

The protein resides in the cell outer membrane. The outer membrane component of an organic solvent efflux pump. Involved in export of a number of low log POW compounds including hexane (log POW 3.5), toluene (log POW 2.5) and dimethylphthalate (log POW 2.3). The solvent resistance phenotype has been postulated to depend on the operon expression level. The chain is Solvent efflux pump outer membrane protein SrpC (srpC) from Pseudomonas putida (Arthrobacter siderocapsulatus).